The chain runs to 567 residues: DNA ligase B (567 aa).

Lys132 acts as the N6-AMP-lysine intermediate in catalysis.

This sequence belongs to the NAD-dependent DNA ligase family. LigB subfamily.

The enzyme catalyses NAD(+) + (deoxyribonucleotide)n-3'-hydroxyl + 5'-phospho-(deoxyribonucleotide)m = (deoxyribonucleotide)n+m + AMP + beta-nicotinamide D-nucleotide.. Functionally, catalyzes the formation of phosphodiester linkages between 5'-phosphoryl and 3'-hydroxyl groups in double-stranded DNA using NAD as a coenzyme and as the energy source for the reaction. This Yersinia pestis protein is DNA ligase B.